A 269-amino-acid chain; its full sequence is Hydroxyethylthiazole kinase (269 aa).

A substrate-binding site is contributed by Met-42. ATP contacts are provided by Arg-118 and Ser-164. Gly-191 is a substrate binding site.

This sequence belongs to the Thz kinase family. It depends on Mg(2+) as a cofactor.

The enzyme catalyses 5-(2-hydroxyethyl)-4-methylthiazole + ATP = 4-methyl-5-(2-phosphooxyethyl)-thiazole + ADP + H(+). The protein operates within cofactor biosynthesis; thiamine diphosphate biosynthesis; 4-methyl-5-(2-phosphoethyl)-thiazole from 5-(2-hydroxyethyl)-4-methylthiazole: step 1/1. Functionally, catalyzes the phosphorylation of the hydroxyl group of 4-methyl-5-beta-hydroxyethylthiazole (THZ). The protein is Hydroxyethylthiazole kinase of Listeria monocytogenes serotype 4a (strain HCC23).